The primary structure comprises 292 residues: ATP phosphoribosyltransferase (292 aa).

This sequence belongs to the ATP phosphoribosyltransferase family. Long subfamily. It depends on Mg(2+) as a cofactor.

Its subcellular location is the cytoplasm. The enzyme catalyses 1-(5-phospho-beta-D-ribosyl)-ATP + diphosphate = 5-phospho-alpha-D-ribose 1-diphosphate + ATP. The protein operates within amino-acid biosynthesis; L-histidine biosynthesis; L-histidine from 5-phospho-alpha-D-ribose 1-diphosphate: step 1/9. Its activity is regulated as follows. Feedback inhibited by histidine. In terms of biological role, catalyzes the condensation of ATP and 5-phosphoribose 1-diphosphate to form N'-(5'-phosphoribosyl)-ATP (PR-ATP). Has a crucial role in the pathway because the rate of histidine biosynthesis seems to be controlled primarily by regulation of HisG enzymatic activity. This is ATP phosphoribosyltransferase from Desulfatibacillum aliphaticivorans.